The following is a 527-amino-acid chain: MKRDFLGRTLAVIEDLSVEEQMFLYEKTRELKQRWYSGEDVSDFRIKKRNVGIYIVFVEPSTRTKESFINAAKFHSGPNVKVNVFDSEHSSFNKQESYTDTFSMLTGYSDYSIFVVRTRLEGVCRLLERRISEFASRNGIEVPSFINAGDGKHEHPTQELLDEYTFLEQNGFDNSFIHVALVGDLLHGRTVHSKVNGLKIFKNVKVDLVAPEELMMPEHYVEKMKKNGFEVRIFSSIREYLDQKDVAKIWYFTRLQLERMGEDILEKVHVLREAVTFKKEYLDALPEGVKFYHPLPRHKVYPTIPNFLDTLPLNGWETQARNGYWVRIVLLSMFGGALEAPFDTSKKEEKPEEDFIIPAPITHGSKGVQKEGKRGIKPIENGTVIDHIAKGKTPEEIYSTILKIRKILRLYDVDSADGIFRSSDGSFKGYISLPDRYLSKKEIKKLSAISPNTTVNIIKNSTVVEKYRIKLPPTIYGFEELRCKNENCITNPAHGENASPSFVRNEKGQFICEYCETPHSFEEIWSI.

The tract at residues 1–342 (MKRDFLGRTL…MFGGALEAPF (342 aa)) is aspartate carbamoyltransferase. The segment at 343-357 (DTSKKEEKPEEDFII) is linker. The tract at residues 368 to 527 (VQKEGKRGIK…PHSFEEIWSI (160 aa)) is aspartate carbamoyltransferase regulatory region. Positions 483, 488, 512, and 515 each coordinate Zn(2+).

This sequence in the N-terminal section; belongs to the aspartate/ornithine carbamoyltransferase superfamily. ATCase family. The protein in the C-terminal section; belongs to the PyrI family.

The catalysed reaction is carbamoyl phosphate + L-aspartate = N-carbamoyl-L-aspartate + phosphate + H(+). The protein operates within pyrimidine metabolism; UMP biosynthesis via de novo pathway; (S)-dihydroorotate from bicarbonate: step 2/3. The chain is Protein PyrBI (pyrBI) from Thermotoga maritima (strain ATCC 43589 / DSM 3109 / JCM 10099 / NBRC 100826 / MSB8).